A 623-amino-acid polypeptide reads, in one-letter code: Transketolase (623 aa).

Position 1 is an N-acetylmethionine (methionine 1). Serine 3 carries the post-translational modification Phosphoserine. Lysine 6 and lysine 11 each carry N6-acetyllysine. Residue histidine 37 participates in substrate binding. Residues serine 40 and histidine 77 each coordinate thiamine diphosphate. Serine 104 bears the Phosphoserine mark. Glycine 123 to leucine 125 contacts thiamine diphosphate. Lysine 144 carries the N6-acetyllysine modification. Aspartate 155 contacts Mg(2+). The thiamine diphosphate site is built by glycine 156 and asparagine 185. Mg(2+) contacts are provided by asparagine 185 and leucine 187. Lysine 204, lysine 232, and lysine 241 each carry N6-acetyllysine. Thiamine diphosphate is bound by residues lysine 244 and histidine 258. Histidine 258 provides a ligand contact to substrate. Position 260 is an N6-acetyllysine (lysine 260). Tyrosine 275 carries the phosphotyrosine modification. A Phosphothreonine modification is found at threonine 287. The residue at position 295 (serine 295) is a Phosphoserine. Residues arginine 318 and serine 345 each contribute to the substrate site. Serine 345 is modified (phosphoserine). Residue lysine 352 forms a Glycyl lysine isopeptide (Lys-Gly) (interchain with G-Cter in SUMO2) linkage. Glutamate 366 functions as the Proton donor in the catalytic mechanism. Phenylalanine 392 serves as a coordination point for thiamine diphosphate. The substrate site is built by histidine 416 and aspartate 424. Glutamine 428 serves as a coordination point for thiamine diphosphate. Arginine 474 provides a ligand contact to substrate. N6-acetyllysine is present on residues lysine 538 and lysine 603.

This sequence belongs to the transketolase family. In terms of assembly, homodimer. The cofactor is Mg(2+). Requires Ca(2+) as cofactor. Mn(2+) is required as a cofactor. Co(2+) serves as cofactor. It depends on thiamine diphosphate as a cofactor.

It carries out the reaction D-sedoheptulose 7-phosphate + D-glyceraldehyde 3-phosphate = aldehydo-D-ribose 5-phosphate + D-xylulose 5-phosphate. Functionally, catalyzes the transfer of a two-carbon ketol group from a ketose donor to an aldose acceptor, via a covalent intermediate with the cofactor thiamine pyrophosphate. The chain is Transketolase (TKT) from Homo sapiens (Human).